The primary structure comprises 160 residues: Cytochrome b6-f complex subunit 4 (160 aa).

3 helical membrane-spanning segments follow: residues 36 to 56, 95 to 115, and 131 to 151; these read LLYIFPVVILGTIACVVGLAV, LLGIALQTLIPLGLMILPFIE, and VVFLFGTFLTIYLGIGACLPI.

Belongs to the cytochrome b family. PetD subfamily. As to quaternary structure, the 4 large subunits of the cytochrome b6-f complex are cytochrome b6, subunit IV (17 kDa polypeptide, PetD), cytochrome f and the Rieske protein, while the 4 small subunits are PetG, PetL, PetM and PetN. The complex functions as a dimer.

The protein resides in the cellular thylakoid membrane. In terms of biological role, component of the cytochrome b6-f complex, which mediates electron transfer between photosystem II (PSII) and photosystem I (PSI), cyclic electron flow around PSI, and state transitions. The chain is Cytochrome b6-f complex subunit 4 from Prochlorococcus marinus (strain MIT 9515).